The following is a 92-amino-acid chain: Bombyxin A-1 (92 aa).

Residues 1 to 19 (MKILLAIALMLSTVMWVST) form the signal peptide. Residue glutamine 20 is modified to Pyrrolidone carboxylic acid. 3 cysteine pairs are disulfide-bonded: cysteine 29/cysteine 79, cysteine 41/cysteine 92, and cysteine 78/cysteine 83. Residues 50 to 70 (SGAQFASYGSAWLMPYSEGRG) constitute a propeptide, c peptide like.

It belongs to the insulin family. As to quaternary structure, heterodimer of a B chain and an A chain linked by two disulfide bonds.

Its subcellular location is the secreted. Its function is as follows. Brain peptide responsible for activation of prothoracic glands to produce ecdysone in insects. The polypeptide is Bombyxin A-1 (BBXA1) (Bombyx mori (Silk moth)).